We begin with the raw amino-acid sequence, 982 residues long: Polyribonucleotide nucleotidyltransferase 2, mitochondrial (982 aa).

A mitochondrion-targeting transit peptide spans 1–39 (MSMAVASLRLLARGGRRRARFPAPLSVPGGRAAFLSGAA). The KH domain maps to 624–678 (PRLATLSFSSDSLRKLLFHRKKIEQETGARVSVSDGTVTIVAKTQPIMDKAIEKV). Residues 689 to 757 (GRTYKGVVSS…LRGNIKLSLK (69 aa)) enclose the S1 motif 1 domain. 2 disordered regions span residues 792–814 (PSKDANAEPSISKDEDNMIEETP) and 832–892 (QDVT…NDVL). 2 stretches are compositionally biased toward low complexity: residues 846–855 (AKSSPKLSKP) and 868–877 (KKTSGASTTA). An S1 motif 2 domain is found at 920–982 (GDVVTAKVYQ…KGIPVFSLLD (63 aa)).

The protein belongs to the polyribonucleotide nucleotidyltransferase family.

Its subcellular location is the mitochondrion. The catalysed reaction is RNA(n+1) + phosphate = RNA(n) + a ribonucleoside 5'-diphosphate. Functionally, involved in the 3'-end maturation of mitochondrial mRNAs, rRNAs and tRNAs. Functions as a poly(A) mRNA 3'-5' degrading phosphorylase. The chain is Polyribonucleotide nucleotidyltransferase 2, mitochondrial (PNP2) from Oryza sativa subsp. japonica (Rice).